The following is a 559-amino-acid chain: NXPE family member 3 (559 aa).

Residues Met-1–Val-30 form the signal peptide. 3 N-linked (GlcNAc...) asparagine glycosylation sites follow: Asn-26, Asn-237, and Asn-346.

This sequence belongs to the NXPE family.

The protein resides in the secreted. The polypeptide is NXPE family member 3 (NXPE3) (Pongo abelii (Sumatran orangutan)).